The chain runs to 419 residues: Double-stranded RNA-binding protein 1 (419 aa).

DRBM domains follow at residues 15–84 (VFKS…ELAK) and 101–170 (LCKN…AIQS). The Bipartite nuclear localization motif lies at 207–222 (KARKAQFKKKAQKGKR). Repeat copies occupy residues 247–274 (EKIETTPNLEPSSCMNGLKEAAFGSVET), 275–302 (EKIETTPNLEPPSCMNGLKEAAFGSVET), 303–330 (EKIETTPNLEPPSCMNGLKEAAFGSVET), 331–358 (EKIETTPNLEPSSCMNGLKEAAFGSVET), 359–386 (EKIETTPNLEPPSCMNGLKEAAFGSVET), and 387–414 (EKIETTPNLESSSCMSGLKEAAFGSVET). The tract at residues 247–414 (EKIETTPNLE…KEAAFGSVET (168 aa)) is 6 X 28 AA repeats of E-K-I-E-T-T-P-N-L-E-[PS]-[PS]-S-C-M-[NS]-G-L-K-E-A-A-F-G-S-V-E-T.

Homodimer. Heterodimer with DRB2, DRB4 or DRB5. Interacts with SE and DCL1. Interacts with RCF3, RS40 and RS41. As to expression, expressed in rosette and cauline leaves, stems, roots, flowers and siliques.

It localises to the nucleus. Its subcellular location is the nucleus speckle. Functionally, double-stranded RNA-binding protein involved in RNA-mediated post-transcriptional gene silencing (PTGS). Functions in the microRNAs (miRNAs) biogenesis by assisting DICER-LIKE 1 (DCL1) in the accurate processing from primary miRNAs (pri-miRNAs) to miRNAs in the nucleus. Forms a complex with SERRATE (SE) and DCL1 to promote accurate processing of pri-miRNAs by DCL1. Binds and assist DCL1 for accurate processing of precursor miRNAs (pre-miRNA). Indirectly involved in the production of trans-acting small interfering RNAs (ta-siRNAs) derived from the TAS1, TAS2 or TAS3 endogenous transcripts by participating in the production of their initiating miRNAs. Involved with argonaute 1 (AGO1) in the guide strand selection from miRNA duplexes, presumably by directional loading of the miRNA duplex (guide stand and passenger strand) onto the RNA-induced silencing complex (RISC) for passenger strand degradation. Does not participate in sense transgene-induced post-transcriptional gene silencing (S-PTGS). Involved in several plant development aspects and response to hormones through its role in miRNAs processing. This is Double-stranded RNA-binding protein 1 (DRB1) from Arabidopsis thaliana (Mouse-ear cress).